Consider the following 91-residue polypeptide: Conotoxin VnMKLT1-021 (91 aa).

The N-terminal stretch at 1-22 is a signal peptide; the sequence is MKLTCVMIVAVLFLTAWTFVTA. A propeptide spanning residues 23–57 is cleaved from the precursor; it reads DDPRDGPDTAVGWRKLFSEARDEMKNREASKLNER. 3 cysteine pairs are disulfide-bonded: cysteine 59-cysteine 78, cysteine 66-cysteine 82, and cysteine 77-cysteine 86.

It belongs to the conotoxin O1 superfamily. In terms of tissue distribution, expressed by the venom duct.

It localises to the secreted. In Conus ventricosus (Mediterranean cone), this protein is Conotoxin VnMKLT1-021.